The primary structure comprises 78 residues: Consomatin Nc1 (78 aa).

An N-terminal signal peptide occupies residues 1-22 (MQTAYWVMVMVMVWITAPLSEG). Positions 23–59 (GKPNDVIRGLVPDDLTPQLILRSLISRRRSDKDVGKR) are excised as a propeptide. Glu-61 carries the 4-carboxyglutamate modification. A disulfide bridge links Cys-62 with Cys-67. At Trp-64 the chain carries D-tryptophan. The residue at position 70 (Pro-70) is a 4-hydroxyproline. Positions 71 to 78 (LSRRHDLG) are excised as a propeptide.

The protein belongs to the conotoxin C superfamily. Consomatin family. As to expression, expressed by the venom duct.

The protein resides in the secreted. Functionally, moderately activates human somatostatin receptors (SSTR) with a preferential activation of SSTR1 and SSTR4. In vivo, does not cause behavioral changes in mice within a few minutes of intracranial injection, but causes a progressive loss of movement thereafter. Four to five hours after injection, mice recover, even with the highest dose tested. Shows antinociception and antihyperalgesia activities in two mouse models of acute pain, most probably by acting outside the central nervous system. In Conus neocostatus (Cone snail), this protein is Consomatin Nc1.